A 109-amino-acid chain; its full sequence is Arminin 6560 (109 aa).

The signal sequence occupies residues 1–21 (MKCLFGFLFIMLVAFLQDVHG). The propeptide occupies 22–77 (VDSCIGKPCKVKGEDMKDIKEKKIEDIKEEIKNVKKEIFEDVDDELLDDNIRDDKI). Residue Ile-106 is modified to Isoleucine amide.

The protein belongs to the arminin family. As to expression, expressed in the ectodermal epithelium.

It is found in the secreted. It localises to the target cell membrane. Functionally, antimicrobial peptide with a broad-spectrum antimicrobial activity. Keeps its antibacterial activity under a wide range of salt concentrations that mimic physiological conditions of human blood, which is surprising, since Hydra is an obligate freshwater animal with nearly no salt tolerance. Does not affect red blood cells. The sequence is that of Arminin 6560 from Hydra vulgaris (Hydra).